A 507-amino-acid polypeptide reads, in one-letter code: Histidine ammonia-lyase (507 aa).

The segment at residues 143–145 (ASG) is a cross-link (5-imidazolinone (Ala-Gly)). S144 is modified (2,3-didehydroalanine (Ser)).

This sequence belongs to the PAL/histidase family. Post-translationally, contains an active site 4-methylidene-imidazol-5-one (MIO), which is formed autocatalytically by cyclization and dehydration of residues Ala-Ser-Gly.

The protein localises to the cytoplasm. It carries out the reaction L-histidine = trans-urocanate + NH4(+). The protein operates within amino-acid degradation; L-histidine degradation into L-glutamate; N-formimidoyl-L-glutamate from L-histidine: step 1/3. In Alkaliphilus oremlandii (strain OhILAs) (Clostridium oremlandii (strain OhILAs)), this protein is Histidine ammonia-lyase.